A 270-amino-acid polypeptide reads, in one-letter code: Formamidopyrimidine-DNA glycosylase (270 aa).

The active-site Schiff-base intermediate with DNA is the proline 2. The Proton donor role is filled by glutamate 3. Residue lysine 58 is the Proton donor; for beta-elimination activity of the active site. The DNA site is built by histidine 91, arginine 110, and arginine 151. An FPG-type zinc finger spans residues 236–270 (AVYGREGEPCTHCGAPLQGVRIGGRATIYCSQCQR). The active-site Proton donor; for delta-elimination activity is the arginine 260.

It belongs to the FPG family. As to quaternary structure, monomer. The cofactor is Zn(2+).

The catalysed reaction is Hydrolysis of DNA containing ring-opened 7-methylguanine residues, releasing 2,6-diamino-4-hydroxy-5-(N-methyl)formamidopyrimidine.. It carries out the reaction 2'-deoxyribonucleotide-(2'-deoxyribose 5'-phosphate)-2'-deoxyribonucleotide-DNA = a 3'-end 2'-deoxyribonucleotide-(2,3-dehydro-2,3-deoxyribose 5'-phosphate)-DNA + a 5'-end 5'-phospho-2'-deoxyribonucleoside-DNA + H(+). Its function is as follows. Involved in base excision repair of DNA damaged by oxidation or by mutagenic agents. Acts as a DNA glycosylase that recognizes and removes damaged bases. Has a preference for oxidized purines, such as 7,8-dihydro-8-oxoguanine (8-oxoG). Has AP (apurinic/apyrimidinic) lyase activity and introduces nicks in the DNA strand. Cleaves the DNA backbone by beta-delta elimination to generate a single-strand break at the site of the removed base with both 3'- and 5'-phosphates. The sequence is that of Formamidopyrimidine-DNA glycosylase from Acidithiobacillus ferrooxidans (strain ATCC 23270 / DSM 14882 / CIP 104768 / NCIMB 8455) (Ferrobacillus ferrooxidans (strain ATCC 23270)).